The following is a 133-amino-acid chain: MVEWHKIIEDISKNNKFEDAAIVDYKTTKNVLAAIPNRTFAKINPGEVIPLITNHNILKPLIGQKFCIVYTNSLMDENTYAMELLTGYAPVSPIVIARTHTALIFLMGKPTTSRRDVYRTCRDHATRVRATGN.

The protein belongs to the profilin family.

More likely to influence phosphoinositide metabolism than actin assembly. The sequence is that of Profilin from Camelus.